The sequence spans 516 residues: Maturase K (516 aa).

Belongs to the intron maturase 2 family. MatK subfamily.

It localises to the plastid. The protein resides in the chloroplast. In terms of biological role, usually encoded in the trnK tRNA gene intron. Probably assists in splicing its own and other chloroplast group II introns. The sequence is that of Maturase K from Medeola virginiana (Indian cucumber root).